We begin with the raw amino-acid sequence, 269 residues long: Protein MGF 360-15R (269 aa).

It belongs to the asfivirus MGF 360 family.

Its function is as follows. Plays a role in virus cell tropism, and may be required for efficient virus replication in macrophages. The sequence is that of Protein MGF 360-15R from African swine fever virus (isolate Pig/Kenya/KEN-50/1950) (ASFV).